Reading from the N-terminus, the 208-residue chain is Large ribosomal subunit protein uL3 (208 aa).

Position 149 is an N5-methylglutamine (Q149).

This sequence belongs to the universal ribosomal protein uL3 family. Part of the 50S ribosomal subunit. Forms a cluster with proteins L14 and L19. Methylated by PrmB.

One of the primary rRNA binding proteins, it binds directly near the 3'-end of the 23S rRNA, where it nucleates assembly of the 50S subunit. The chain is Large ribosomal subunit protein uL3 from Glaesserella parasuis serovar 5 (strain SH0165) (Haemophilus parasuis).